The primary structure comprises 101 residues: Diptericin-D (101 aa).

A signal peptide spans 1 to 18 (MKLFYLLVICALSLAVMA). Threonine 28 and threonine 72 each carry an O-linked (GalNAc...) threonine glycan. Phenylalanine amide is present on phenylalanine 100.

Belongs to the attacin/sarcotoxin-2 family.

In terms of biological role, has activity against E.coli. The protein is Diptericin-D of Protophormia terraenovae (Northern blowfly).